Consider the following 388-residue polypeptide: Succinate--CoA ligase [ADP-forming] subunit beta (388 aa).

ATP is bound by residues lysine 46, 53–55, glutamate 99, cysteine 102, and glutamate 107; that span reads GRG. Asparagine 199 and aspartate 213 together coordinate Mg(2+). Substrate-binding positions include asparagine 264 and 321 to 323; that span reads GIV.

Belongs to the succinate/malate CoA ligase beta subunit family. In terms of assembly, heterotetramer of two alpha and two beta subunits. Mg(2+) serves as cofactor.

It carries out the reaction succinate + ATP + CoA = succinyl-CoA + ADP + phosphate. The enzyme catalyses GTP + succinate + CoA = succinyl-CoA + GDP + phosphate. It functions in the pathway carbohydrate metabolism; tricarboxylic acid cycle; succinate from succinyl-CoA (ligase route): step 1/1. Functionally, succinyl-CoA synthetase functions in the citric acid cycle (TCA), coupling the hydrolysis of succinyl-CoA to the synthesis of either ATP or GTP and thus represents the only step of substrate-level phosphorylation in the TCA. The beta subunit provides nucleotide specificity of the enzyme and binds the substrate succinate, while the binding sites for coenzyme A and phosphate are found in the alpha subunit. The protein is Succinate--CoA ligase [ADP-forming] subunit beta of Actinobacillus pleuropneumoniae serotype 3 (strain JL03).